The chain runs to 509 residues: Tyrosine-protein phosphatase non-receptor type substrate 1 (509 aa).

The first 31 residues, 1–31 (MEPAGPAPGRLGPLLFCLLLSASCFCAGASG), serve as a signal peptide directing secretion. Residues 32-138 (KELKVTQADK…IVEPDTEIKS (107 aa)) enclose the Ig-like V-type domain. Residues 32-373 (KELKVTQADK…PDNNAYYNWN (342 aa)) lie on the Extracellular side of the membrane. N-linked (GlcNAc...) asparagine glycosylation is found at Asn-54, Asn-93, Asn-169, Asn-181, Asn-205, Asn-209, Asn-242, Asn-246, Asn-271, Asn-293, Asn-312, Asn-320, and Asn-345. Cys-55 and Cys-122 are joined by a disulfide. Ig-like C1-type domains are found at residues 150 to 248 (PSSP…ANFS) and 255 to 349 (PTLK…HTVR). An intrachain disulfide couples Cys-172 to Cys-229. A disulfide bond links Cys-274 and Cys-332. Residues 374–394 (VFIGVGVACALLVVLLMAALY) form a helical membrane-spanning segment. Over 395–509 (LLRIKQKKAK…EYASVQVQRK (115 aa)) the chain is Cytoplasmic. Position 436 is a phosphotyrosine; by Tyr-kinases (Tyr-436). The SH2-binding signature appears at 436–439 (YADL). The disordered stretch occupies residues 441–472 (LPKEKKPAPRVPEPNNHTEYASIETGKLPRPE). The SH3-binding signature appears at 446-451 (KPAPRV). Tyr-460, Tyr-477, and Tyr-501 each carry phosphotyrosine; by Tyr-kinases. 3 consecutive short sequence motifs (SH2-binding) follow at residues 460–463 (YASI), 477–480 (YADL), and 501–504 (YASV). The disordered stretch occupies residues 485–509 (LNRAQPTPKPEPSFSEYASVQVQRK). Over residues 500 to 509 (EYASVQVQRK) the composition is skewed to polar residues.

Binds PTPN11 when tyrosine-phosphorylated, except in macrophages, where it primarily binds PTPN6. Binds GRB2 in vitro. Binds FGR. Binds JAK2 irrespective of its phosphorylation status and forms a stable complex. Binds SCAP1 and/or SCAP2. The resulting complex recruits FYB1. Binds PTK2B. Interacts with TRIM2. In terms of processing, N-glycosylated. Post-translationally, phosphorylated on tyrosine residues in response to insulin, cell adhesion or epidermal growth factors. Dephosphorylated by PTPN11. As to expression, highly expressed in brain, spleen, lung, liver and kidney. Detected at lower levels in heart. Highly expressed in alveolar and peritoneal macrophages, and at lower levels in dendritic cells.

It is found in the membrane. Immunoglobulin-like cell surface receptor for CD47. Acts as docking protein and induces translocation of PTPN6, PTPN11 and other binding partners from the cytosol to the plasma membrane. Supports adhesion of cerebellar neurons, neurite outgrowth and glial cell attachment. May play a key role in intracellular signaling during synaptogenesis and in synaptic function. Involved in the negative regulation of receptor tyrosine kinase-coupled cellular responses induced by cell adhesion, growth factors or insulin. Mediates negative regulation of phagocytosis, mast cell activation and dendritic cell activation. CD47 binding prevents maturation of immature dendritic cells and inhibits cytokine production by mature dendritic cells. Plays a role in antiviral immunity and limits new world arenavirus infection by decreasing virus internalization. Receptor for THBS1. Interaction with THBS1 stimulates phosphorylation of SIRPA. In response to THBS1, involved in ROS signaling in non-phagocytic cells, stimulating NADPH oxidase-derived ROS production. The sequence is that of Tyrosine-protein phosphatase non-receptor type substrate 1 (Sirpa) from Rattus norvegicus (Rat).